A 117-amino-acid chain; its full sequence is Large ribosomal subunit protein uL18 (117 aa).

It belongs to the universal ribosomal protein uL18 family. Part of the 50S ribosomal subunit; part of the 5S rRNA/L5/L18/L25 subcomplex. Contacts the 5S and 23S rRNAs.

Functionally, this is one of the proteins that bind and probably mediate the attachment of the 5S RNA into the large ribosomal subunit, where it forms part of the central protuberance. The polypeptide is Large ribosomal subunit protein uL18 (Thioalkalivibrio sulfidiphilus (strain HL-EbGR7)).